Here is a 228-residue protein sequence, read N- to C-terminus: Ribonuclease HII (228 aa).

Residues 11–202 (GPVAGVDEAG…VVAAAQLHGM (192 aa)) form the RNase H type-2 domain. Residues Asp-17, Glu-18, and Asp-111 each contribute to the a divalent metal cation site.

The protein belongs to the RNase HII family. The cofactor is Mn(2+). It depends on Mg(2+) as a cofactor.

The protein resides in the cytoplasm. The enzyme catalyses Endonucleolytic cleavage to 5'-phosphomonoester.. Functionally, endonuclease that specifically degrades the RNA of RNA-DNA hybrids. The sequence is that of Ribonuclease HII from Saccharopolyspora erythraea (strain ATCC 11635 / DSM 40517 / JCM 4748 / NBRC 13426 / NCIMB 8594 / NRRL 2338).